Consider the following 321-residue polypeptide: Cytochrome c biogenesis protein CcsA (321 aa).

A run of 8 helical transmembrane segments spans residues 17–37, 44–64, 71–91, 98–118, 143–163, 225–245, 258–275, and 286–306; these read IVSIVITIHLITLLVDEIVGL, GMISTFLCITGLLVTRWIYSG, LYESLIFLSWSFSIIHMIPYF, LSLVTAPSAIFTQGFATSGLL, MVLSYGALLCGSLLSVALLVI, VISLGFIFLTIGILSGAVWAN, ETWAFITWTIFAIYLHTR, and AIVASIGFIIIWICYFGVNLL.

Belongs to the CcmF/CycK/Ccl1/NrfE/CcsA family. In terms of assembly, may interact with Ccs1.

It localises to the plastid. Its subcellular location is the chloroplast thylakoid membrane. In terms of biological role, required during biogenesis of c-type cytochromes (cytochrome c6 and cytochrome f) at the step of heme attachment. This Buxus microphylla (Littleleaf boxwood) protein is Cytochrome c biogenesis protein CcsA.